Reading from the N-terminus, the 1463-residue chain is Gag-Pol polyprotein (1463 aa).

Glycine 2 is lipidated: N-myristoyl glycine; by host. Positions 7–31 (VLRGKKADELEKIRLRPGGKKKYRL) are interaction with Gp41. The Nuclear export signal signature appears at 16-22 (LEKIRLR). The Nuclear localization signal signature appears at 26 to 32 (KKKYRLK). Residues 112 to 138 (TKTTEKMPSTSRPTAPPSGNGGNFPVQ) form a disordered region. The segment at 191–228 (NCVGDHQAAMQIIREIINEEAADWDAQHPIPGPLPAGQ) is interaction with human PPIA/CYPA and NUP153. The tract at residues 279 to 365 (YNPTNILDIK…GGPGQKARLM (87 aa)) is dimerization/Multimerization of capsid protein p24. 2 CCHC-type zinc fingers span residues 389-406 (IKCW…QCRA) and 410-427 (QGCW…KCPE). The segment at 441–508 (EAPQFPCGPN…TRDTMQRDDR (68 aa)) is disordered. A compositionally biased stretch (basic and acidic residues) spans 462 to 508 (RPSRGPTREVHAAREKAERAEREAIQRSDRGLPAARETRDTMQRDDR). A dimerization of protease region spans residues 513–517 (PQFSL). A Peptidase A2 domain is found at 532–601 (VEVLLDTGAD…TPINIFGRNI (70 aa)). The For protease activity; shared with dimeric partner role is filled by aspartate 537. Dimerization of protease regions lie at residues 561–567 (GIGGFIN) and 600–612 (NILT…LNLP). One can recognise a Reverse transcriptase domain in the interval 655 to 845 (EGQLEEAPPT…PPYQWMGYEL (191 aa)). Mg(2+)-binding residues include aspartate 721, aspartate 796, and aspartate 797. An RT 'primer grip' region spans residues 838–846 (YQWMGYELW). The Tryptophan repeat motif signature appears at 1008–1024 (WEQWWDNYWQVTWIPDW). Residues 1044–1167 (ILGAETFYTD…VDHLVSQGIR (124 aa)) form the RNase H type-1 domain. Mg(2+) is bound by residues aspartate 1053, glutamate 1088, aspartate 1108, and aspartate 1159. The Integrase-type zinc finger occupies 1173 to 1214 (EKIEPAQEEHEKYHSNVKELSHKFGLPKLVARQIVNTCTQCQ). Positions 1182, 1186, 1210, and 1213 each coordinate Zn(2+). One can recognise an Integrase catalytic domain in the interval 1223–1374 (QVNAELGTWQ…TPAERLINMV (152 aa)). Residues aspartate 1234, aspartate 1286, and glutamate 1322 each contribute to the Mg(2+) site. The segment at residues 1393-1440 (FRVYFREGRDQLWKGPGELLWKGDGAVIVKVGADIKIIPRRKAKIIKD) is a DNA-binding region (integrase-type).

As to quaternary structure, homotrimer; further assembles as hexamers of trimers. Interacts with gp41 (via C-terminus). Interacts with host CALM1; this interaction induces a conformational change in the Matrix protein, triggering exposure of the myristate group. Interacts with host AP3D1; this interaction allows the polyprotein trafficking to multivesicular bodies during virus assembly. Part of the pre-integration complex (PIC) which is composed of viral genome, matrix protein, Vpr and integrase. Homodimer; the homodimer further multimerizes as homohexamers or homopentamers. Interacts with human PPIA/CYPA. Interacts with human NUP153. Interacts with host PDZD8; this interaction stabilizes the capsid. Interacts with monkey TRIM5; this interaction destabilizes the capsid. In terms of assembly, homodimer, whose active site consists of two apposed aspartic acid residues. As to quaternary structure, heterodimer of p66 RT and p51 RT (RT p66/p51). Heterodimerization of RT is essential for DNA polymerase activity. The overall folding of the subdomains is similar in p66 RT and p51 RT but the spatial arrangements of the subdomains are dramatically different. Homotetramer; may further associate as a homohexadecamer. Part of the pre-integration complex (PIC) which is composed of viral genome, matrix protein, Vpr and integrase. Interacts with human SMARCB1/INI1 and human PSIP1/LEDGF isoform 1. Interacts with human KPNA3; this interaction might play a role in nuclear import of the pre-integration complex. Interacts with human NUP153; this interaction might play a role in nuclear import of the pre-integration complex. Mg(2+) is required as a cofactor. In terms of processing, specific enzymatic cleavages by the viral protease yield mature proteins. The protease is released by autocatalytic cleavage. The polyprotein is cleaved during and after budding, this process is termed maturation. Proteolytic cleavage of p66 RT removes the RNase H domain to yield the p51 RT subunit. Nucleocapsid protein p7 might be further cleaved after virus entry.

It is found in the host cell membrane. The protein resides in the host endosome. The protein localises to the host multivesicular body. It localises to the virion membrane. Its subcellular location is the host nucleus. It is found in the host cytoplasm. The protein resides in the virion. It carries out the reaction Endopeptidase for which the P1 residue is preferably hydrophobic.. It catalyses the reaction Endohydrolysis of RNA in RNA/DNA hybrids. Three different cleavage modes: 1. sequence-specific internal cleavage of RNA. Human immunodeficiency virus type 1 and Moloney murine leukemia virus enzymes prefer to cleave the RNA strand one nucleotide away from the RNA-DNA junction. 2. RNA 5'-end directed cleavage 13-19 nucleotides from the RNA end. 3. DNA 3'-end directed cleavage 15-20 nucleotides away from the primer terminus.. The catalysed reaction is 3'-end directed exonucleolytic cleavage of viral RNA-DNA hybrid.. The enzyme catalyses DNA(n) + a 2'-deoxyribonucleoside 5'-triphosphate = DNA(n+1) + diphosphate. Protease: The viral protease is inhibited by many synthetic protease inhibitors (PIs), such as amprenavir, atazanavir, indinavir, loprinavir, nelfinavir, ritonavir and saquinavir. Use of protease inhibitors in tritherapy regimens permit more ambitious therapeutic strategies. Reverse transcriptase/ribonuclease H: RT can be inhibited either by nucleoside RT inhibitors (NRTIs) or by non nucleoside RT inhibitors (NNRTIs). NRTIs act as chain terminators, whereas NNRTIs inhibit DNA polymerization by binding a small hydrophobic pocket near the RT active site and inducing an allosteric change in this region. Classical NRTIs are abacavir, adefovir (PMEA), didanosine (ddI), lamivudine (3TC), stavudine (d4T), tenofovir (PMPA), zalcitabine (ddC), and zidovudine (AZT). Classical NNRTIs are atevirdine (BHAP U-87201E), delavirdine, efavirenz (DMP-266), emivirine (I-EBU), and nevirapine (BI-RG-587). The tritherapies used as a basic effective treatment of AIDS associate two NRTIs and one NNRTI. In terms of biological role, mediates, with Gag polyprotein, the essential events in virion assembly, including binding the plasma membrane, making the protein-protein interactions necessary to create spherical particles, recruiting the viral Env proteins, and packaging the genomic RNA via direct interactions with the RNA packaging sequence (Psi). Gag-Pol polyprotein may regulate its own translation, by the binding genomic RNA in the 5'-UTR. At low concentration, the polyprotein would promote translation, whereas at high concentration, the polyprotein would encapsidate genomic RNA and then shut off translation. Targets the polyprotein to the plasma membrane via a multipartite membrane-binding signal, that includes its myristoylated N-terminus. Matrix protein is part of the pre-integration complex. Implicated in the release from host cell mediated by Vpu. Binds to RNA. Its function is as follows. Forms the conical core that encapsulates the genomic RNA-nucleocapsid complex in the virion. Most core are conical, with only 7% tubular. The core is constituted by capsid protein hexamer subunits. The core is disassembled soon after virion entry. Host restriction factors such as TRIM5-alpha or TRIMCyp bind retroviral capsids and cause premature capsid disassembly, leading to blocks in reverse transcription. Capsid restriction by TRIM5 is one of the factors which restricts HIV-1 to the human species. Host PIN1 apparently facilitates the virion uncoating. On the other hand, interactions with PDZD8 or CYPA stabilize the capsid. Functionally, encapsulates and protects viral dimeric unspliced genomic RNA (gRNA). Binds these RNAs through its zinc fingers. Acts as a nucleic acid chaperone which is involved in rearangement of nucleic acid secondary structure during gRNA retrotranscription. Also facilitates template switch leading to recombination. As part of the polyprotein, participates in gRNA dimerization, packaging, tRNA incorporation and virion assembly. In terms of biological role, aspartyl protease that mediates proteolytic cleavages of Gag and Gag-Pol polyproteins during or shortly after the release of the virion from the plasma membrane. Cleavages take place as an ordered, step-wise cascade to yield mature proteins. This process is called maturation. Displays maximal activity during the budding process just prior to particle release from the cell. Also cleaves Nef and Vif, probably concomitantly with viral structural proteins on maturation of virus particles. Hydrolyzes host EIF4GI and PABP1 in order to shut off the capped cellular mRNA translation. The resulting inhibition of cellular protein synthesis serves to ensure maximal viral gene expression and to evade host immune response. Multifunctional enzyme that converts the viral RNA genome into dsDNA in the cytoplasm, shortly after virus entry into the cell. This enzyme displays a DNA polymerase activity that can copy either DNA or RNA templates, and a ribonuclease H (RNase H) activity that cleaves the RNA strand of RNA-DNA heteroduplexes in a partially processive 3' to 5' endonucleasic mode. Conversion of viral genomic RNA into dsDNA requires many steps. A tRNA(3)-Lys binds to the primer-binding site (PBS) situated at the 5'-end of the viral RNA. RT uses the 3' end of the tRNA primer to perform a short round of RNA-dependent minus-strand DNA synthesis. The reading proceeds through the U5 region and ends after the repeated (R) region which is present at both ends of viral RNA. The portion of the RNA-DNA heteroduplex is digested by the RNase H, resulting in a ssDNA product attached to the tRNA primer. This ssDNA/tRNA hybridizes with the identical R region situated at the 3' end of viral RNA. This template exchange, known as minus-strand DNA strong stop transfer, can be either intra- or intermolecular. RT uses the 3' end of this newly synthesized short ssDNA to perform the RNA-dependent minus-strand DNA synthesis of the whole template. RNase H digests the RNA template except for two polypurine tracts (PPTs) situated at the 5'-end and near the center of the genome. It is not clear if both polymerase and RNase H activities are simultaneous. RNase H probably can proceed both in a polymerase-dependent (RNA cut into small fragments by the same RT performing DNA synthesis) and a polymerase-independent mode (cleavage of remaining RNA fragments by free RTs). Secondly, RT performs DNA-directed plus-strand DNA synthesis using the PPTs that have not been removed by RNase H as primers. PPTs and tRNA primers are then removed by RNase H. The 3' and 5' ssDNA PBS regions hybridize to form a circular dsDNA intermediate. Strand displacement synthesis by RT to the PBS and PPT ends produces a blunt ended, linear dsDNA copy of the viral genome that includes long terminal repeats (LTRs) at both ends. Its function is as follows. Catalyzes viral DNA integration into the host chromosome, by performing a series of DNA cutting and joining reactions. This enzyme activity takes place after virion entry into a cell and reverse transcription of the RNA genome in dsDNA. The first step in the integration process is 3' processing. This step requires a complex comprising the viral genome, matrix protein, Vpr and integrase. This complex is called the pre-integration complex (PIC). The integrase protein removes 2 nucleotides from each 3' end of the viral DNA, leaving recessed CA OH's at the 3' ends. In the second step, the PIC enters cell nucleus. This process is mediated through integrase and Vpr proteins, and allows the virus to infect a non dividing cell. This ability to enter the nucleus is specific of lentiviruses, other retroviruses cannot and rely on cell division to access cell chromosomes. In the third step, termed strand transfer, the integrase protein joins the previously processed 3' ends to the 5' ends of strands of target cellular DNA at the site of integration. The 5'-ends are produced by integrase-catalyzed staggered cuts, 5 bp apart. A Y-shaped, gapped, recombination intermediate results, with the 5'-ends of the viral DNA strands and the 3' ends of target DNA strands remaining unjoined, flanking a gap of 5 bp. The last step is viral DNA integration into host chromosome. This involves host DNA repair synthesis in which the 5 bp gaps between the unjoined strands are filled in and then ligated. Since this process occurs at both cuts flanking the HIV genome, a 5 bp duplication of host DNA is produced at the ends of HIV-1 integration. Alternatively, Integrase may catalyze the excision of viral DNA just after strand transfer, this is termed disintegration. The protein is Gag-Pol polyprotein (gag-pol) of Human immunodeficiency virus type 2 subtype A (isolate ST) (HIV-2).